Reading from the N-terminus, the 410-residue chain is Glycylpeptide N-tetradecanoyltransferase (410 aa).

Tetradecanoyl-CoA-binding residues include Phe30, Trp31, Phe162, Leu163, Cys164, Val165, Ser171, Arg173, Leu174, and Ala175.

The protein belongs to the NMT family. As to quaternary structure, heterodimer composed of NMT and AK2; AK2 myristoylation stabilizes the complex.

It localises to the cytoplasm. It catalyses the reaction N-terminal glycyl-[protein] + tetradecanoyl-CoA = N-tetradecanoylglycyl-[protein] + CoA + H(+). Its function is as follows. Adds a myristoyl group to the N-terminal glycine residue of certain cellular proteins. Myristoylates adenylate kinase AK2. During the asexual blood stage, may myristoylate proteins such as ARO, CDPK1 and GAP45. Probably by mediating protein myristoylation, plays a role in the assembly of the inner membrane complex during the early stages of schizogony and in the formation of rhoptries in the late stages and thus merozoite egress. This chain is Glycylpeptide N-tetradecanoyltransferase, found in Plasmodium falciparum (isolate 3D7).